A 474-amino-acid chain; its full sequence is ATP synthase subunit beta 1 (474 aa).

An ATP-binding site is contributed by 157–164 (GGAGVGKT).

Belongs to the ATPase alpha/beta chains family. F-type ATPases have 2 components, CF(1) - the catalytic core - and CF(0) - the membrane proton channel. CF(1) has five subunits: alpha(3), beta(3), gamma(1), delta(1), epsilon(1). CF(0) has three main subunits: a(1), b(2) and c(9-12). The alpha and beta chains form an alternating ring which encloses part of the gamma chain. CF(1) is attached to CF(0) by a central stalk formed by the gamma and epsilon chains, while a peripheral stalk is formed by the delta and b chains.

The protein localises to the cell inner membrane. It carries out the reaction ATP + H2O + 4 H(+)(in) = ADP + phosphate + 5 H(+)(out). In terms of biological role, produces ATP from ADP in the presence of a proton gradient across the membrane. The catalytic sites are hosted primarily by the beta subunits. This is ATP synthase subunit beta 1 from Polaromonas naphthalenivorans (strain CJ2).